Consider the following 581-residue polypeptide: Arginine--tRNA ligase (581 aa).

The short motif at Ala-131–His-141 is the 'HIGH' region element.

Belongs to the class-I aminoacyl-tRNA synthetase family. In terms of assembly, monomer.

Its subcellular location is the cytoplasm. The catalysed reaction is tRNA(Arg) + L-arginine + ATP = L-arginyl-tRNA(Arg) + AMP + diphosphate. The chain is Arginine--tRNA ligase from Nitrosospira multiformis (strain ATCC 25196 / NCIMB 11849 / C 71).